We begin with the raw amino-acid sequence, 359 residues long: Short chain dehydrogenase resG (359 aa).

The NADP(+) site is built by lysine 87, aspartate 110, asparagine 137, tyrosine 237, and lysine 241. The active-site Proton donor is tyrosine 237. The Lowers pKa of active site Tyr role is filled by lysine 241.

Belongs to the short-chain dehydrogenases/reductases (SDR) family.

It functions in the pathway antifungal biosynthesis. Functionally, short chain dehydrogenase; part of the gene cluster that mediates the biosynthesis of the tetrahydropyranyl antifungal agent restricticin that acts as an inhibitor of CYP51 and blocks the ergosterol biosynthesis. The highly reducing polyketide synthase resH, the short chain dehydrogenase resG, the cyclase resF, the FAD-dependent monooxygenase resA and the enoylreductase resD are required to generate the first stable intermediate desmethylrestrictinol. ResH with resD biosynthesize the first polyketide chain intermediate that is reduced by resG, followed by epoxidation by resA before 6-endo cyclization via epoxide opening by resF leads to desmethylrestrictinol. The methyltransferase resE then catalyzes the C4 O-methylation of desmethylrestrictinol to produce restrictinol, and the nonribosomal peptide synthetase resC catalyzes the C3 esterification of restrictinol with glycine that leads to restricticin. The polypeptide is Short chain dehydrogenase resG (Aspergillus sclerotiorum).